A 452-amino-acid chain; its full sequence is Pup--protein ligase (452 aa).

Glu-9 is a Mg(2+) binding site. Residue Arg-53 coordinates ATP. A Mg(2+)-binding site is contributed by Tyr-55. The active-site Proton acceptor is Asp-57. Mg(2+) is bound at residue Glu-63. ATP is bound by residues Thr-66 and Trp-419.

This sequence belongs to the Pup ligase/Pup deamidase family. Pup-conjugating enzyme subfamily.

The catalysed reaction is ATP + [prokaryotic ubiquitin-like protein]-L-glutamate + [protein]-L-lysine = ADP + phosphate + N(6)-([prokaryotic ubiquitin-like protein]-gamma-L-glutamyl)-[protein]-L-lysine.. It participates in protein degradation; proteasomal Pup-dependent pathway. The protein operates within protein modification; protein pupylation. Catalyzes the covalent attachment of the prokaryotic ubiquitin-like protein modifier Pup to the proteasomal substrate proteins, thereby targeting them for proteasomal degradation. This tagging system is termed pupylation. The ligation reaction involves the side-chain carboxylate of the C-terminal glutamate of Pup and the side-chain amino group of a substrate lysine. The protein is Pup--protein ligase of Mycolicibacterium vanbaalenii (strain DSM 7251 / JCM 13017 / BCRC 16820 / KCTC 9966 / NRRL B-24157 / PYR-1) (Mycobacterium vanbaalenii).